A 1347-amino-acid polypeptide reads, in one-letter code: MAEPRRVAFISLSPVRRREAEYPGPEREPEYPREPPRLEPQPYREPARAEPPAPREPAPRSDAQPPSREKPLPQREVSRAEPPMSLQREPPRPEPPPPFPPLPLQPPPPRESASRAEQPPRPPRETVRLELVLKDPTDESCVEFSYPELLLCGEQRKKLIHTEDPFNDEHQERQEVEMLAKKFEMKYGGKPRKHRKDRLQDLIDIGFGYDETDPFIDNSEAYDELVPASLTTKYGGFYINTGTLQFRQASDTEEDDITDNQKHKPPKVPKIKEDDIEMKKRKRKEEGEKEKKPRKKVPKQLGVVALNSHKSEKKKKRYKDSLSLAAMIRKFQKEKDALKKESNPKVPVTLSTPSLNKPPCAAAALGNDVPDLNLSSGDPDLPIFVSTNEHELFQEAENALEMLDDFDFDRLLDAASDGSPLSESGGENGTTTQPTYTSQVMPKVVPTLPEGLPVLLEKRIEDLRVAAKLFDEEGRKKFFTQDMNNILLDIELQLQELGPVIRSGVYSHLEAFVPCNKETLVKRLKKLHLNVQDDRLREPLQKLKLAVSNVMPEQLFKYQEDCQARSQAKCAKLQTDEEREKNGSEEDDDEKPGKRVIGPRKKFHWDDTIRTLLCNLVEIKLGCYELEPNKSQSAEDYLKSFMETEVKPLWPKGWMQARMLFKESRSVHNHLTSAPAKKKVIPAPKPKVKEVMVKTLPLHSFPTMLKECSPKKDQKTPTSLVASVSGPPTSSSTAAIAAASSSSAPAQETICLDDSLDEDLSFHSPSLDLVSEALAVINNGNKGPPVGSRISMPTTKPRPGLREEKLASIMSKLPLATPKKLDSTQTTHSSSLIAGHTGPVPKKPQDLAHTGISSGLIAGSSIQNPKVSLEPLPARLLQQGLQRSSQIHTSSSSQTHVSSSSQAQIAASSHALGTSEAQDASSLTQVTKVHQHSAVQQNYVSPLQATISKSQTNPVVKLSNNPQLSCSSSLIKTSDKPLMYRLPLSTPSPGNGSQGSHPLVSRTVPSTTTSSNYLAKAMVSQISTQGFKSPFSMAASPKLAASPKPATSPKPLPSPKPSASPKPSLSAKPSVSTKLISKSNPTPKPTVSPSSSSPNALVAQGSHSSTNSPVHKQPSGMNISRQSPTLNLLPSSRTSGLPPTKNLQAPSKLTNSSSTGTVGKNSLSGIAMNVPASRGSNLNSSGANRTSLSGGTGSGTQGATKPLSTPHRPSTASGSSVVTASVQSTAGASLLANASPLTLMTSPLSVTNQNVTPFGMLGGLVPVTMPFQFPLEIFGFGTDTAGVTTTSGSTSAAFHHSLTQNLLKGLQPGGAQHAATLSHSPLPAHLQQAFHDGGQSKGDTKLPRKSQ.

The segment at 1–134 (MAEPRRVAFI…ETVRLELVLK (134 aa)) is disordered. At S13 the chain carries Phosphoserine. 2 stretches are compositionally biased toward basic and acidic residues: residues 16 to 37 (RRRE…EPPR) and 67 to 79 (SREK…EVSR). Positions 93–110 (PEPPPPFPPLPLQPPPPR) are enriched in pro residues. The segment covering 122–134 (PPRETVRLELVLK) has biased composition (basic and acidic residues). At T243 the chain carries Phosphothreonine. A Phosphoserine modification is found at S250. The segment at 250–301 (SDTEEDDITDNQKHKPPKVPKIKEDDIEMKKRKRKEEGEKEKKPRKKVPKQL) is disordered. Position 252 is a phosphothreonine (T252). A Glycyl lysine isopeptide (Lys-Gly) (interchain with G-Cter in SUMO2) cross-link involves residue K272. 5 positions are modified to phosphoserine: S311, S416, S419, S422, and S584. 6 disordered regions span residues 573-597 (LQTD…KRVI), 707-740 (ECSP…AAAS), 815-849 (LATP…DLAH), 880-913 (GLQR…HALG), 981-1006 (RLPL…TVPS), and 1035-1218 (ASPK…SSVV). Residues 574–584 (QTDEEREKNGS) show a composition bias toward basic and acidic residues. Residues 721 to 740 (VASVSGPPTSSSTAAIAAAS) show a composition bias toward low complexity. Polar residues predominate over residues 823-832 (STQTTHSSSL). Residues 880–911 (GLQRSSQIHTSSSSQTHVSSSSQAQIAASSHA) are compositionally biased toward low complexity. Over residues 985-996 (STPSPGNGSQGS) the composition is skewed to polar residues. Residues 1035–1045 (ASPKLAASPKP) are compositionally biased toward low complexity. Residues 1046-1060 (ATSPKPLPSPKPSAS) show a composition bias toward pro residues. 2 stretches are compositionally biased toward low complexity: residues 1061-1070 (PKPSLSAKPS) and 1077-1095 (SKSN…SSPN). K1068 bears the N6-acetyllysine mark. Composition is skewed to polar residues over residues 1101 to 1164 (GSHS…NSLS) and 1174 to 1185 (RGSNLNSSGANR). S1123 carries the phosphoserine modification. K1148 carries the post-translational modification N6-acetyllysine.

The protein belongs to the ubinuclein family. As to expression, expressed in several cell lines tested, including primary and transformed cell lines.

The chain is Ubinuclein-2 (UBN2) from Homo sapiens (Human).